The primary structure comprises 194 residues: Potassium-transporting ATPase KdpC subunit (194 aa).

A helical transmembrane segment spans residues 12–34 (LFLLLLTGGVYPLLTTALGQWWF).

This sequence belongs to the KdpC family. In terms of assembly, the system is composed of three essential subunits: KdpA, KdpB and KdpC.

The protein localises to the cell inner membrane. Functionally, part of the high-affinity ATP-driven potassium transport (or Kdp) system, which catalyzes the hydrolysis of ATP coupled with the electrogenic transport of potassium into the cytoplasm. This subunit acts as a catalytic chaperone that increases the ATP-binding affinity of the ATP-hydrolyzing subunit KdpB by the formation of a transient KdpB/KdpC/ATP ternary complex. In Salmonella agona (strain SL483), this protein is Potassium-transporting ATPase KdpC subunit.